The sequence spans 394 residues: [Pyruvate dehydrogenase (acetyl-transferring)] kinase 1, mitochondrial (394 aa).

A mitochondrion-targeting transit peptide spans Met-1–Arg-20. The Histidine kinase domain maps to Ala-126 to Ser-386. The residue at position 148 (His-148) is a Phosphohistidine; by autocatalysis. Residues Glu-267–Glu-274, Asp-304, Ser-323–Thr-324, and Gly-347–Leu-352 contribute to the ATP site.

It belongs to the PDK/BCKDK protein kinase family. As to quaternary structure, interacts with PKP2.

Its subcellular location is the mitochondrion matrix. The catalysed reaction is L-seryl-[pyruvate dehydrogenase E1 alpha subunit] + ATP = O-phospho-L-seryl-[pyruvate dehydrogenase E1 alpha subunit] + ADP + H(+). In terms of biological role, inhibits the mitochondrial pyruvate dehydrogenase complex by phosphorylation of the E1 alpha subunit (PDA1), thus contributing to the regulation of glucose metabolism. Also involved in telomere maintenance. The chain is [Pyruvate dehydrogenase (acetyl-transferring)] kinase 1, mitochondrial from Saccharomyces cerevisiae (strain ATCC 204508 / S288c) (Baker's yeast).